The following is a 114-amino-acid chain: Large ribosomal subunit protein bL19 (114 aa).

It belongs to the bacterial ribosomal protein bL19 family.

Its function is as follows. This protein is located at the 30S-50S ribosomal subunit interface and may play a role in the structure and function of the aminoacyl-tRNA binding site. The polypeptide is Large ribosomal subunit protein bL19 (Bacillus cereus (strain AH187)).